The sequence spans 496 residues: Beta-amylase (496 aa).

3 residues coordinate substrate: Asp54, His94, and Asp102. Residue Glu187 is the Proton donor of the active site. Lys296, His301, and Thr343 together coordinate substrate. Glu381 functions as the Proton acceptor in the catalytic mechanism. Residues 382–383 (NA) and Arg421 contribute to the substrate site.

The protein belongs to the glycosyl hydrolase 14 family.

The catalysed reaction is Hydrolysis of (1-&gt;4)-alpha-D-glucosidic linkages in polysaccharides so as to remove successive maltose units from the non-reducing ends of the chains.. In Trifolium repens (Creeping white clover), this protein is Beta-amylase (BMY1).